Reading from the N-terminus, the 301-residue chain is Protoheme IX farnesyltransferase (301 aa).

The next 9 helical transmembrane spans lie at 16 to 36, 41 to 61, 93 to 113, 114 to 134, 141 to 161, 172 to 192, 217 to 237, 238 to 258, and 273 to 293; these read VVAL…PGMP, IQSG…AAAI, VFAG…VNLI, TAVL…VYLK, IVIG…AVTG, SLLV…LAIF, QILL…ATGM, SGVF…WYAW, and FGYS…DHWL.

The protein belongs to the UbiA prenyltransferase family. Protoheme IX farnesyltransferase subfamily.

Its subcellular location is the cell inner membrane. It catalyses the reaction heme b + (2E,6E)-farnesyl diphosphate + H2O = Fe(II)-heme o + diphosphate. Its pathway is porphyrin-containing compound metabolism; heme O biosynthesis; heme O from protoheme: step 1/1. Its function is as follows. Converts heme B (protoheme IX) to heme O by substitution of the vinyl group on carbon 2 of heme B porphyrin ring with a hydroxyethyl farnesyl side group. The sequence is that of Protoheme IX farnesyltransferase from Xylella fastidiosa (strain Temecula1 / ATCC 700964).